Reading from the N-terminus, the 118-residue chain is Ribonuclease P protein component (118 aa).

Belongs to the RnpA family. As to quaternary structure, consists of a catalytic RNA component (M1 or rnpB) and a protein subunit.

The enzyme catalyses Endonucleolytic cleavage of RNA, removing 5'-extranucleotides from tRNA precursor.. Its function is as follows. RNaseP catalyzes the removal of the 5'-leader sequence from pre-tRNA to produce the mature 5'-terminus. It can also cleave other RNA substrates such as 4.5S RNA. The protein component plays an auxiliary but essential role in vivo by binding to the 5'-leader sequence and broadening the substrate specificity of the ribozyme. The protein is Ribonuclease P protein component of Bifidobacterium animalis subsp. lactis (strain AD011).